Reading from the N-terminus, the 254-residue chain is Caffeoyl-CoA O-methyltransferase (254 aa).

Positions Met-1–Val-25 are disordered. Residues Glu-7–Val-25 show a composition bias toward basic and acidic residues. Position 28 (Lys-28) interacts with substrate. S-adenosyl-L-methionine-binding positions include Thr-70, Glu-92, Gly-94 to Val-95, Ser-100, Asp-118, and Ala-147. Asp-170 contacts substrate. A divalent metal cation is bound at residue Asp-170. Asp-172 is a binding site for S-adenosyl-L-methionine. A divalent metal cation-binding residues include Asp-196 and Asn-197. Residue Asn-201 participates in substrate binding.

Belongs to the class I-like SAM-binding methyltransferase superfamily. Cation-dependent O-methyltransferase family. CCoAMT subfamily. A divalent metal cation serves as cofactor.

The enzyme catalyses (E)-caffeoyl-CoA + S-adenosyl-L-methionine = (E)-feruloyl-CoA + S-adenosyl-L-homocysteine + H(+). It participates in aromatic compound metabolism; phenylpropanoid biosynthesis. Functionally, methylates caffeoyl-CoA to feruloyl-CoA and 5-hydroxyferuloyl-CoA to sinapoyl-CoA. Plays a role in the synthesis of feruloylated polysaccharides. Involved in the reinforcement of the plant cell wall. Also involved in the responding to wounding or pathogen challenge by the increased formation of cell wall-bound ferulic acid polymers. The chain is Caffeoyl-CoA O-methyltransferase from Mesembryanthemum crystallinum (Common ice plant).